The sequence spans 160 residues: 3-hydroxyacyl-[acyl-carrier-protein] dehydratase FabZ (160 aa).

His63 is an active-site residue.

It belongs to the thioester dehydratase family. FabZ subfamily.

The protein localises to the cytoplasm. It carries out the reaction a (3R)-hydroxyacyl-[ACP] = a (2E)-enoyl-[ACP] + H2O. Involved in unsaturated fatty acids biosynthesis. Catalyzes the dehydration of short chain beta-hydroxyacyl-ACPs and long chain saturated and unsaturated beta-hydroxyacyl-ACPs. This chain is 3-hydroxyacyl-[acyl-carrier-protein] dehydratase FabZ, found in Xylella fastidiosa (strain M12).